The following is a 1206-amino-acid chain: DNA-directed RNA polymerase subunit beta' (1206 aa).

Zn(2+) is bound by residues Cys60, Cys62, Cys75, and Cys78. Mg(2+) contacts are provided by Asp449, Asp451, and Asp453. Zn(2+) is bound by residues Cys818, Cys892, Cys899, and Cys902.

The protein belongs to the RNA polymerase beta' chain family. The RNAP catalytic core consists of 2 alpha, 1 beta, 1 beta' and 1 omega subunit. When a sigma factor is associated with the core the holoenzyme is formed, which can initiate transcription. Requires Mg(2+) as cofactor. Zn(2+) serves as cofactor.

It catalyses the reaction RNA(n) + a ribonucleoside 5'-triphosphate = RNA(n+1) + diphosphate. In terms of biological role, DNA-dependent RNA polymerase catalyzes the transcription of DNA into RNA using the four ribonucleoside triphosphates as substrates. The polypeptide is DNA-directed RNA polymerase subunit beta' (Halalkalibacterium halodurans (strain ATCC BAA-125 / DSM 18197 / FERM 7344 / JCM 9153 / C-125) (Bacillus halodurans)).